The sequence spans 484 residues: UDP-N-acetylmuramoyl-L-alanyl-D-glutamate--2,6-diaminopimelate ligase (484 aa).

Residue 110–116 (GTNGKTT) coordinates ATP. UDP-N-acetyl-alpha-D-muramoyl-L-alanyl-D-glutamate-binding positions include 152–153 (TT), S179, and R187. K219 is modified (N6-carboxylysine). Meso-2,6-diaminopimelate contacts are provided by residues R381, 405 to 408 (DNPR), G455, and E459. Positions 405-408 (DNPR) match the Meso-diaminopimelate recognition motif motif.

It belongs to the MurCDEF family. MurE subfamily. Mg(2+) is required as a cofactor. In terms of processing, carboxylation is probably crucial for Mg(2+) binding and, consequently, for the gamma-phosphate positioning of ATP.

It localises to the cytoplasm. The enzyme catalyses UDP-N-acetyl-alpha-D-muramoyl-L-alanyl-D-glutamate + meso-2,6-diaminopimelate + ATP = UDP-N-acetyl-alpha-D-muramoyl-L-alanyl-gamma-D-glutamyl-meso-2,6-diaminopimelate + ADP + phosphate + H(+). Its pathway is cell wall biogenesis; peptidoglycan biosynthesis. Functionally, catalyzes the addition of meso-diaminopimelic acid to the nucleotide precursor UDP-N-acetylmuramoyl-L-alanyl-D-glutamate (UMAG) in the biosynthesis of bacterial cell-wall peptidoglycan. The protein is UDP-N-acetylmuramoyl-L-alanyl-D-glutamate--2,6-diaminopimelate ligase of Clostridium perfringens (strain 13 / Type A).